Here is a 90-residue protein sequence, read N- to C-terminus: N(2)-fixation sustaining protein CowN (90 aa).

The protein belongs to the CowN family.

Functionally, is required to sustain N(2)-dependent growth in the presence of low levels of carbon monoxide (CO). Probably acts by protecting the N(2) fixation ability of the nitrogenase complex, which is inactivated in the presence of CO. This chain is N(2)-fixation sustaining protein CowN, found in Methylocella silvestris (strain DSM 15510 / CIP 108128 / LMG 27833 / NCIMB 13906 / BL2).